The chain runs to 813 residues: Calpain-7 (813 aa).

Position 1 is an N-acetylmethionine (Met1). A Phosphothreonine modification is found at Thr95. Residues 232-540 (RERFAYPMPF…YDVVYLSWNP (309 aa)) form the Calpain catalytic domain. Catalysis depends on residues Cys290, His458, and Asn478. The interval 541–701 (ALFKESTCIH…INGKWSGQSA (161 aa)) is domain III. Residues 702 to 813 (GGCGNFQETH…TVPIKTTQLQ (112 aa)) are domain N.

The protein belongs to the peptidase C2 family. In terms of tissue distribution, ubiquitous.

The protein resides in the nucleus. Functionally, calcium-regulated non-lysosomal thiol-protease. This Mus musculus (Mouse) protein is Calpain-7 (Capn7).